We begin with the raw amino-acid sequence, 210 residues long: Transcription factor ALC (210 aa).

The disordered stretch occupies residues 1-49 (MGDSDVGDRLPPPSSSDELSSFLRQILSRTPTAQPSSPPKSTNVSSAET). A compositionally biased stretch (polar residues) spans 27–48 (LSRTPTAQPSSPPKSTNVSSAE). Positions 93–142 (IDAQFHNLSEKKRRSKINEKMKALQKLIPNSNKTDKASMLDEAIEYLKQL) constitute a bHLH domain.

As to quaternary structure, homodimer. Expressed constitutively in roots, leaves, stems, and flowers. Confined to the valve margins of the silique.

The protein resides in the nucleus. In terms of biological role, required for the dehiscence of fruit, especially for the separation of the valve cells from the replum. Promotes the differentiation of a strip of labile nonlignified cells sandwiched between layers of lignified cells. This is Transcription factor ALC (ALC) from Arabidopsis thaliana (Mouse-ear cress).